The following is a 1136-amino-acid chain: MAERITDEQVADLLAILRTDASVDAKANRITAVKTSIKQHNVPATCFAPLFEALHIASTAQHPVLVNAGFTTLNHLLARLARQDPKFLAKEAPHTLPVVVDKLGDQKDKFRQIAVQALTTLYKVAPVDVERSVRNIAMVGKNPRAKEMSMHWLLQTHQEQGLQFRAYVPTLMELLEDADGSVRDVAKTTVIELFKNAPNTAKSDLKRQLKNFKVRPAIEQVIVKELNNPSSSVSSHQNDMMDLDEPVMPTRAPAPASIRTNLSASVPTLASERPLTPGLDSRPEPVEPQFVNTQRELDDIFRDMHMFFDGRETEQNWLKREESMTKLRRLIAGNAVSDFHDSFLAALRALLDGIIKAVTSLRTSLSKEGCALVQDIATAYGPGMDPMVEILMQTFVKLCAATKKISSAQANATINTILGKVSYTNRLMQHIWMACQDKNVQPRLYATEWLTTMLTKMAHHKNQVEHTGGLDLIEKCIKKGLADANPGVREKMRATYWTFSGIWPARATHIMNELDLTAQKLLQKDPHNPNAHSRTETGGARPGMGLSKSVMGAPKPSVRDAIIAQKRAMASSKNQPPRPGSAMAHFSPVGTTRNVSSTSQASVASASTASAVPAPTKSAFGASSGGLSGAPMRPGKRRPEVAARPATAGPYSVRNEVPPAEPASPPSKPRIKTVTSPKTQTLVISPKKAIPRPQQGHSTNSSESGIPIPVSGISSPTKPTSAFGLRSPRSPLAPELPPSSVIASPSRVMPDPAQIPLPESSPSKDEELSLVVPGSVLPTQKTPSPTEESQQPQIAIVPIEAVEIVPDSPYRSVQVYEDPYTAGQTQPQSTYTSPVLEPKPVNEGAATSPPPQPSYDGENGHDMGEIPIPSSPERTRQNSRLLDSGISKVETKSLDVHGFRKLQGIIRDPKGGAIFTDDKFNALLSGLFEFLEAHPSEIPHVPAEKQQDVKAQILATIKLLLKKMRENFRPHVSRGLDSLLRARAAYDSRSHIVSGMELLADELITLGDPTEITLVLANTLREALLDKDQQHNTAARSLSMGMHVLKEVVESSANSSTPFTPTEQELDTLAGLAAKCLESADSAVRMDAVQLCVALHAKVGDQRFWDAVKREGVRDDPKSLITYYIVRRQREVGTNA.

HEAT repeat units follow at residues 95–133 (TLPVVVDKLGDQKDKFRQIAVQALTTLYKVAPVDVERSV) and 167–205 (YVPTLMELLEDADGSVRDVAKTTVIELFKNAPNTAKSDL). 3 disordered regions span residues 524 to 554 (KDPHNPNAHSRTETGGARPGMGLSKSVMGAP), 567 to 794 (RAMA…QPQI), and 821 to 884 (TAGQ…LLDS). Positions 595–622 (VSSTSQASVASASTASAVPAPTKSAFGA) are enriched in low complexity. Positions 659-668 (PAEPASPPSK) are enriched in pro residues. Positions 673-683 (TVTSPKTQTLV) are enriched in polar residues. Residues 701–716 (SSESGIPIPVSGISSP) show a composition bias toward low complexity. Polar residues-rich tracts occupy residues 777–793 (LPTQKTPSPTEESQQPQ) and 822–833 (AGQTQPQSTYTS).

The protein belongs to the CLASP family. As to quaternary structure, interacts with microtubules.

The protein resides in the nucleus. It is found in the cytoplasm. Its subcellular location is the cytoskeleton. The protein localises to the spindle. Its function is as follows. Microtubule binding protein that promotes the stabilization of dynamic microtubules. Required for mitotic spindle formation. The protein is Protein stu-1 (stu-1) of Neurospora crassa (strain ATCC 24698 / 74-OR23-1A / CBS 708.71 / DSM 1257 / FGSC 987).